The primary structure comprises 520 residues: Keratin, type II cytoskeletal 72 (520 aa).

The segment at 1-133 (MSRQLTLYPG…DPEIQKVRAQ (133 aa)) is head. The tract at residues 134-169 (EREQIKALNNKFASFIDKVRFLEQQNQVLETKWELL) is coil 1A. Residues 134 to 447 (EREQIKALNN…KLLESEESRM (314 aa)) enclose the IF rod domain. The linker 1 stretch occupies residues 170–188 (QQLDQNNSRRSLEPVHESY). The tract at residues 189–280 (ISNLQKQLEI…VLFEGEIAQM (92 aa)) is coil 1B. Residues 281–304 (QSHISDTSVILSMDNNRQLDLDSI) are linker 12. Positions 305–443 (LAEVRAQYEE…ATYRKLLESE (139 aa)) are coil 2. Residues 444 to 520 (ESRMAGEYPS…SSCVSKKASR (77 aa)) are tail. The tract at residues 495 to 520 (GSCGSELKDPPAKTSASSCVSKKASR) is disordered.

This sequence belongs to the intermediate filament family. Heterotetramer of two type I and two type II keratins.

Its function is as follows. Has a role in hair formation. Specific component of keratin intermediate filaments in the inner root sheath (IRS) of the hair follicle. The polypeptide is Keratin, type II cytoskeletal 72 (Krt72) (Rattus norvegicus (Rat)).